The following is a 2313-amino-acid chain: Protein Ycf2 (2313 aa).

1606 to 1613 (GSMETGRS) is a binding site for ATP.

This sequence belongs to the Ycf2 family.

It is found in the plastid. It localises to the chloroplast stroma. Functionally, probable ATPase of unknown function. Its presence in a non-photosynthetic plant (Epifagus virginiana) and experiments in tobacco indicate that it has an essential function which is probably not related to photosynthesis. The sequence is that of Protein Ycf2 from Psilotum nudum (Whisk fern).